The following is a 917-amino-acid chain: DNA topoisomerase 1 beta (917 aa).

Positions 1-368 are disordered; it reads MATEAFVKPV…SLPSGDGQKK (368 aa). Positions 32–63 are enriched in polar residues; sequence RNSNTAATTNRPSPINNAMRNSAIGSTKSSPP. Positions 66 to 82 are enriched in low complexity; sequence SPLTSPNRSASSSTRSS. A compositionally biased stretch (polar residues) spans 89–100; sequence PSSSSVQRSTLK. 2 stretches are compositionally biased toward basic and acidic residues: residues 102–116 and 134–149; these read PLRD…ERNG and DKPL…KEVT. The span at 150–170 shows a compositional bias: polar residues; it reads KQPSSSGRGSTQQAVQKSNMR. Basic and acidic residues predominate over residues 177–187; sequence YTKKKVLDERA. Residues 189 to 205 show a composition bias toward polar residues; that stretch reads MSSTVQTKTSVGTSSSK. Composition is skewed to basic and acidic residues over residues 256–265 and 296–307; these read KLSEPARPVK and VKEDNSDGDDHV. A Phosphoserine modification is found at S301. The span at 316 to 338 shows a compositional bias: low complexity; it reads DSSNNKSSSAKPSSSKMIASSSR. Interaction with DNA regions lie at residues 575–576, 638–643, and 729–731; these read KY, RAGNEK, and TAK. A Topo IB-type catalytic domain is found at 582-912; it reads SSSLKGQSDK…MDVDPEFRFC (331 aa). Residues 779 to 858 are a coiled coil; it reads VSKSHGAQVE…ERDMQTKEDM (80 aa). The active-site O-(3'-phospho-DNA)-tyrosine intermediate is Y870.

This sequence belongs to the type IB topoisomerase family.

It localises to the nucleus. The enzyme catalyses ATP-independent breakage of single-stranded DNA, followed by passage and rejoining.. Functionally, releases the supercoiling and torsional tension of DNA introduced during the DNA replication and transcription by transiently cleaving and rejoining one strand of the DNA duplex. Introduces a single-strand break via transesterification at a target site in duplex DNA. The scissile phosphodiester is attacked by the catalytic tyrosine of the enzyme, resulting in the formation of a DNA-(3'-phosphotyrosyl)-enzyme intermediate and the expulsion of a 5'-OH DNA strand. The free DNA strand then rotates around the intact phosphodiester bond on the opposing strand, thus removing DNA supercoils. Finally, in the religation step, the DNA 5'-OH attacks the covalent intermediate to expel the active-site tyrosine and restore the DNA phosphodiester backbone. Topoisomerases 1 enzymes (TOP1A and TOP1B) are essential for plant survival. The polypeptide is DNA topoisomerase 1 beta (Arabidopsis thaliana (Mouse-ear cress)).